A 174-amino-acid polypeptide reads, in one-letter code: Shikimate kinase 2 (174 aa).

12–17 (GCGKTT) is an ATP binding site. Positions 16 and 32 each coordinate Mg(2+). Residues D34, R58, and G79 each coordinate substrate. The segment at 112-126 (RAYPEDDQRPSLTGK) is LID domain. R120 serves as a coordination point for ATP. R139 is a binding site for substrate. Q155 lines the ATP pocket.

Belongs to the shikimate kinase family. AroL subfamily. Monomer. The cofactor is Mg(2+).

The protein localises to the cytoplasm. It carries out the reaction shikimate + ATP = 3-phosphoshikimate + ADP + H(+). The protein operates within metabolic intermediate biosynthesis; chorismate biosynthesis; chorismate from D-erythrose 4-phosphate and phosphoenolpyruvate: step 5/7. Its function is as follows. Catalyzes the specific phosphorylation of the 3-hydroxyl group of shikimic acid using ATP as a cosubstrate. In Sodalis glossinidius (strain morsitans), this protein is Shikimate kinase 2.